The primary structure comprises 306 residues: UDP-3-O-acyl-N-acetylglucosamine deacetylase (306 aa).

Residues H79, H238, and D242 each contribute to the Zn(2+) site. H265 serves as the catalytic Proton donor.

Belongs to the LpxC family. Requires Zn(2+) as cofactor.

It carries out the reaction a UDP-3-O-[(3R)-3-hydroxyacyl]-N-acetyl-alpha-D-glucosamine + H2O = a UDP-3-O-[(3R)-3-hydroxyacyl]-alpha-D-glucosamine + acetate. The protein operates within glycolipid biosynthesis; lipid IV(A) biosynthesis; lipid IV(A) from (3R)-3-hydroxytetradecanoyl-[acyl-carrier-protein] and UDP-N-acetyl-alpha-D-glucosamine: step 2/6. In terms of biological role, catalyzes the hydrolysis of UDP-3-O-myristoyl-N-acetylglucosamine to form UDP-3-O-myristoylglucosamine and acetate, the committed step in lipid A biosynthesis. The chain is UDP-3-O-acyl-N-acetylglucosamine deacetylase from Shewanella sediminis (strain HAW-EB3).